A 355-amino-acid chain; its full sequence is Uroporphyrinogen decarboxylase (355 aa).

Substrate-binding positions include 27–31, D78, Y155, S210, and H328; that span reads RQAGR.

It belongs to the uroporphyrinogen decarboxylase family. As to quaternary structure, homodimer.

The protein resides in the cytoplasm. The catalysed reaction is uroporphyrinogen III + 4 H(+) = coproporphyrinogen III + 4 CO2. The protein operates within porphyrin-containing compound metabolism; protoporphyrin-IX biosynthesis; coproporphyrinogen-III from 5-aminolevulinate: step 4/4. Its function is as follows. Catalyzes the decarboxylation of four acetate groups of uroporphyrinogen-III to yield coproporphyrinogen-III. The sequence is that of Uroporphyrinogen decarboxylase from Ectopseudomonas mendocina (strain ymp) (Pseudomonas mendocina).